Reading from the N-terminus, the 445-residue chain is UPF0210 protein SPT_0285 (445 aa).

The protein belongs to the UPF0210 family. Homodimer.

The polypeptide is UPF0210 protein SPT_0285 (Streptococcus pneumoniae (strain Taiwan19F-14)).